Consider the following 176-residue polypeptide: Translation initiation factor IF-3 (176 aa).

This sequence belongs to the IF-3 family. As to quaternary structure, monomer.

It localises to the cytoplasm. In terms of biological role, IF-3 binds to the 30S ribosomal subunit and shifts the equilibrium between 70S ribosomes and their 50S and 30S subunits in favor of the free subunits, thus enhancing the availability of 30S subunits on which protein synthesis initiation begins. The chain is Translation initiation factor IF-3 from Wolinella succinogenes (strain ATCC 29543 / DSM 1740 / CCUG 13145 / JCM 31913 / LMG 7466 / NCTC 11488 / FDC 602W) (Vibrio succinogenes).